Consider the following 422-residue polypeptide: Glycine amidinotransferase, mitochondrial (422 aa).

Residues Asp-253 and His-302 contribute to the active site. Catalysis depends on Cys-406, which acts as the Amidino-cysteine intermediate.

Belongs to the amidinotransferase family. In terms of assembly, homodimer. Strongly expressed in neurons and glia of the brain, the lamina propria, submucosa and serosa of the small intestine, in oocytes and on the fringes of the pancreas. Not expressed in the retina, eye lens, heart or bulbus arteriosus. Expressed in the yolk syncytial layer in gastrula stage embryos, in the yolk syncytial layer and mature somites in early segmentation embryos and in the yolk syncytial layer and the liver of long-pec stage (48 hours post-fertilization) embryos.

The protein localises to the mitochondrion inner membrane. It carries out the reaction L-arginine + glycine = guanidinoacetate + L-ornithine. The protein operates within amine and polyamine biosynthesis; creatine biosynthesis; creatine from L-arginine and glycine: step 1/2. Catalyzes the biosynthesis of guanidinoacetate, the immediate precursor of creatine. Creatine plays a vital role in energy metabolism in muscle tissues. May play a role in embryonic and central nervous system development. This Danio rerio (Zebrafish) protein is Glycine amidinotransferase, mitochondrial.